Reading from the N-terminus, the 211-residue chain is LexA repressor (211 aa).

The segment at residues 29–49 is a DNA-binding region (H-T-H motif); it reads VREICTAVGLRSTSTVHSHLN. Catalysis depends on for autocatalytic cleavage activity residues Ser131 and Lys169.

Belongs to the peptidase S24 family. As to quaternary structure, homodimer.

The catalysed reaction is Hydrolysis of Ala-|-Gly bond in repressor LexA.. Represses a number of genes involved in the response to DNA damage (SOS response), including recA and lexA. In the presence of single-stranded DNA, RecA interacts with LexA causing an autocatalytic cleavage which disrupts the DNA-binding part of LexA, leading to derepression of the SOS regulon and eventually DNA repair. The sequence is that of LexA repressor from Clostridioides difficile (strain 630) (Peptoclostridium difficile).